A 552-amino-acid chain; its full sequence is MERFLRKYNISGDYANATRTFLAISPQWTCSHLKRNCLFNGMCVKQHFERAMIAATDAEEPAKAYKLVELAKEAMYDRETVWLQCFKSFSQPYEEDVEGKMKRCGAQLLEDYRKSGMMNEAVKQSALVNSERIRLDDSLSAMPYIYVPINDGQIVNPTFISRYRQIAYYFYNPDAADDWIDPNLFGIRGQHNQIKREVERQINTCPYTGYRGRVFQVMFLPIQLINFLRMDDFAKRFNRYASMAIQQYLRVGYAEEIRYVQQLFGRVPTGEFPLHQMMLMRRDLPTRDRSIVEARVRRSGDENWQSWLLPMIIIREGLDHQDRWEWFIDYMDRKHTCQLCYLKHSKQIPACSVIDVRASELTGCSPFKMVKIEEHVGNDSVFKTKLVRDEQIGRIGDHYYTTNCYTGAEALITTAIHIHRWIRGSGIWNDEGWQEGIFMLGRVLLRWELTKAQRSALLRLFCFVCYGYAPRADGTIPDWNNLGNFLDIILKGPELSEDEDERAYATMFEMVRCIITLCYAEKVHYAGFAAPACEGGEVINLAARMSQMWMEY.

Belongs to the orbivirus non-structural protein NS1 family.

The chain is Non-structural protein NS1 (Segment-5) from Antilocapra americana (Pronghorn).